Consider the following 235-residue polypeptide: Transcription factor hepR (235 aa).

The disordered stretch occupies residues 14–45 (QNSPESSRDVLSMASPGLLPIDPSPEHDETNK). Residues 175 to 205 (IQCPCLDERGERCSRMFSRLDNMRDHVRRIH) form a C2H2-type zinc finger.

It is found in the nucleus. Functionally, transcription factor; part of the gene cluster that mediates the biosynthesis of heptelidic acid (HA), a sesquiterpene lactone that acts as an inhibitor of glyceraldehyde-3-phosphatedehydrogenase (GAPDH) and a growth inhibitor of the salt-tolerant lactic acid bacteria in soy sauce brewing. Both hepR and hepS regulate the transcription of the heptelidic acid cluster, but they are not involved in mutual transcriptional regulation and act with different mechanisms. The protein is Transcription factor hepR of Aspergillus oryzae (strain ATCC 42149 / RIB 40) (Yellow koji mold).